A 459-amino-acid chain; its full sequence is MSFTFAIIGRPNVGKSTLFNRLVGQKLALVDDTPGVTRDRREGEGRLGDLEFTIIDTAGLDEGAKGSLTARMQQQTETAIELADALMFVFDARAGLTPNDRAFADFARRANKPVVLVANKSEGKAGGIGAMESYALGLGDPVQISAEHGEGLSELYDALRAIMPEPEVEDDDEEIDGLTEEDFSKRPIRVAIVGRPNAGKSTFINRLLGEDRLLTSPEAGTTRDSIAVEVNWKGREFRIFDTAGLRRRSRIEEKLEKLSVADALRAVRFAEVVVLMMDSQNRFEEQDLRIADLIEREGRALVIAVNKWDLVEQQGGQIAQLRADADHWLPQVRGVPIVATSGMLGEGVDRLIDAIQDAYAVWNTRVSTAALNRWFEQAVAQNPPPAVAGRRLKLNYVTQTKARPPSFVVFCSRADAVPESYLRYLVNSLRGVFKLPGTPVRITLREKANPFAHKRKRKS.

EngA-type G domains are found at residues 3 to 167 and 188 to 363; these read FTFA…PEPE and IRVA…AVWN. Residues 9–16, 56–60, 119–122, 194–201, 241–245, and 306–309 contribute to the GTP site; these read GRPNVGKS, DTAGL, NKSE, GRPNAGKS, and NKWD. A KH-like domain is found at 364-448; the sequence is TRVSTAALNR…PVRITLREKA (85 aa).

It belongs to the TRAFAC class TrmE-Era-EngA-EngB-Septin-like GTPase superfamily. EngA (Der) GTPase family. In terms of assembly, associates with the 50S ribosomal subunit.

In terms of biological role, GTPase that plays an essential role in the late steps of ribosome biogenesis. The chain is GTPase Der from Rhodopseudomonas palustris (strain HaA2).